Consider the following 306-residue polypeptide: Homoserine kinase (306 aa).

Position 84-94 (84-94 (PAGLGLGSSGA)) interacts with ATP.

Belongs to the GHMP kinase family. Homoserine kinase subfamily.

The protein localises to the cytoplasm. The catalysed reaction is L-homoserine + ATP = O-phospho-L-homoserine + ADP + H(+). It participates in amino-acid biosynthesis; L-threonine biosynthesis; L-threonine from L-aspartate: step 4/5. Its function is as follows. Catalyzes the ATP-dependent phosphorylation of L-homoserine to L-homoserine phosphate. This Sulfolobus acidocaldarius (strain ATCC 33909 / DSM 639 / JCM 8929 / NBRC 15157 / NCIMB 11770) protein is Homoserine kinase.